The sequence spans 338 residues: Glycerol-3-phosphate dehydrogenase [NAD(P)+] (338 aa).

Residues W14, Y50, and K110 each contribute to the NADPH site. Sn-glycerol 3-phosphate is bound by residues K110, G141, and S143. A145 is an NADPH binding site. The sn-glycerol 3-phosphate site is built by K196, D249, S259, R260, and N261. K196 functions as the Proton acceptor in the catalytic mechanism. Residue R260 coordinates NADPH. Residue E285 coordinates NADPH.

This sequence belongs to the NAD-dependent glycerol-3-phosphate dehydrogenase family.

Its subcellular location is the cytoplasm. The catalysed reaction is sn-glycerol 3-phosphate + NAD(+) = dihydroxyacetone phosphate + NADH + H(+). It carries out the reaction sn-glycerol 3-phosphate + NADP(+) = dihydroxyacetone phosphate + NADPH + H(+). It participates in membrane lipid metabolism; glycerophospholipid metabolism. Catalyzes the reduction of the glycolytic intermediate dihydroxyacetone phosphate (DHAP) to sn-glycerol 3-phosphate (G3P), the key precursor for phospholipid synthesis. The chain is Glycerol-3-phosphate dehydrogenase [NAD(P)+] from Malacoplasma penetrans (strain HF-2) (Mycoplasma penetrans).